The primary structure comprises 169 residues: Phosphopantetheine adenylyltransferase (169 aa).

Ser-10 contacts substrate. ATP contacts are provided by residues 10 to 11 (SF) and His-18. 3 residues coordinate substrate: Lys-42, Thr-79, and Arg-93. Residues 94–96 (GLR), Glu-104, and 129–135 (VRPITAT) each bind ATP.

The protein belongs to the bacterial CoaD family. In terms of assembly, homohexamer. Requires Mg(2+) as cofactor.

Its subcellular location is the cytoplasm. It catalyses the reaction (R)-4'-phosphopantetheine + ATP + H(+) = 3'-dephospho-CoA + diphosphate. It participates in cofactor biosynthesis; coenzyme A biosynthesis; CoA from (R)-pantothenate: step 4/5. In terms of biological role, reversibly transfers an adenylyl group from ATP to 4'-phosphopantetheine, yielding dephospho-CoA (dPCoA) and pyrophosphate. This Rhodopseudomonas palustris (strain ATCC BAA-98 / CGA009) protein is Phosphopantetheine adenylyltransferase.